We begin with the raw amino-acid sequence, 249 residues long: Probable cobalt-factor III C(17)-methyltransferase (249 aa).

Belongs to the precorrin methyltransferase family.

The catalysed reaction is Co(II)-factor III + S-adenosyl-L-methionine + H(+) = Co(II)-factor IV + S-adenosyl-L-homocysteine. It functions in the pathway cofactor biosynthesis; adenosylcobalamin biosynthesis; cob(II)yrinate a,c-diamide from sirohydrochlorin (anaerobic route): step 3/10. Methyltransferase that likely catalyzes the ring contraction and methylation of C-17 in cobalt-factor III to form cobalt-factor IV. May also convert cobalt-precorrin-3 to cobalt-precorrin-4. In Methanocaldococcus jannaschii (strain ATCC 43067 / DSM 2661 / JAL-1 / JCM 10045 / NBRC 100440) (Methanococcus jannaschii), this protein is Probable cobalt-factor III C(17)-methyltransferase (cbiH).